A 104-amino-acid chain; its full sequence is Matrix Gla protein (104 aa).

Positions 1 to 19 (MKSLLPLAILAALAVATLC) are cleaved as a signal peptide. Glutamate 21 bears the 4-carboxyglutamate mark. A phosphoserine mark is found at serine 22, serine 25, and serine 28. In terms of domain architecture, Gla spans 51-97 (RAKAQKRVQERNKPAYEINREACDDYKLCERYAMVYGYNAAYNRYFR). 4-carboxyglutamate is present on residues glutamate 60, glutamate 67, and glutamate 71. Residues cysteine 73 and cysteine 79 are joined by a disulfide bond.

The protein belongs to the osteocalcin/matrix Gla protein family. In terms of processing, requires vitamin K-dependent gamma-carboxylation for its function.

It is found in the secreted. Functionally, associates with the organic matrix of bone and cartilage. Thought to act as an inhibitor of bone formation. This chain is Matrix Gla protein (Mgp), found in Mus musculus (Mouse).